A 200-amino-acid chain; its full sequence is Isochorismatase family protein 2A (200 aa).

It belongs to the isochorismatase family.

The polypeptide is Isochorismatase family protein 2A (Dictyostelium discoideum (Social amoeba)).